A 513-amino-acid chain; its full sequence is MGAATKLAFAVFLISCSSGAILGRSETQECIYYNANWEKDKTNRSGIEPCYGDKDKRRHCFATWKNISGSIEIVKQGCWLDDINCYDRNDCIEKKDSPEVFFCCCEGNMCNERFFYFPEMEVTQPTSNPVTPKPPLFNTLLYSLVPIMGIAVIVLFSFWMYRHHKLAYPPVLVPTQDPGPPPPSPLMGLKPLQLLEIKARGRFGCVWKAQLLNEYVAVKIFPIQDKQSWQNEYEIYSLPGMKHDNILQFIGAEKRGTSIDVDLWLITAFHEKGSLTDFLKANVVSWNELCHIAQTMARGLAYLHEDIPGLKDGHKPAISHRDIKSKNVLLKNNLTACIADFGLALKFEAGKSAGDTHGQVGTRRYMAPEVLEGAINFQRDAFLRIDMYAMGLVLWELASRCTASDGPVDEYMLPFEEEIGQHPSLEDMQEVVVHKKKRPVLRECWQKHSGMAMLCETIEECWDHDAEARLSAGCVEERIIQMQKLTNIITTEDIVTVVTMVTNVDFPPKESSL.

The N-terminal stretch at 1–19 (MGAATKLAFAVFLISCSSG) is a signal peptide. At 20-139 (AILGRSETQE…VTPKPPLFNT (120 aa)) the chain is on the extracellular side. Cystine bridges form between Cys30–Cys60, Cys50–Cys78, Cys85–Cys104, Cys91–Cys103, and Cys105–Cys110. 2 N-linked (GlcNAc...) asparagine glycosylation sites follow: Asn43 and Asn66. The chain crosses the membrane as a helical span at residues 140–160 (LLYSLVPIMGIAVIVLFSFWM). Topologically, residues 161–513 (YRHHKLAYPP…VDFPPKESSL (353 aa)) are cytoplasmic. The Protein kinase domain occupies 192-485 (LQLLEIKARG…EERIIQMQKL (294 aa)). Residues 198-206 (KARGRFGCV) and Lys219 contribute to the ATP site. The active-site Proton acceptor is Asp322.

Belongs to the protein kinase superfamily. TKL Ser/Thr protein kinase family. TGFB receptor subfamily. It depends on Mg(2+) as a cofactor. Requires Mn(2+) as cofactor. Expressed in hen anterior pituitary during the ovulatory cycle and in the ovarian follicle.

Its subcellular location is the cell membrane. It carries out the reaction L-threonyl-[receptor-protein] + ATP = O-phospho-L-threonyl-[receptor-protein] + ADP + H(+). It catalyses the reaction L-seryl-[receptor-protein] + ATP = O-phospho-L-seryl-[receptor-protein] + ADP + H(+). Its function is as follows. On ligand binding, forms a receptor complex consisting of two type II and two type I transmembrane serine/threonine kinases. Type II receptors phosphorylate and activate type I receptors which autophosphorylate, then bind and activate SMAD transcriptional regulators. Receptor for activin A, activin B and inhibin A. May modulate neuropeptide expression in dorsal root ganglia (DRG) neurons and ovarian follicle development. In Gallus gallus (Chicken), this protein is Activin receptor type-2A (ACVR2A).